Consider the following 352-residue polypeptide: Small ribosomal subunit biogenesis GTPase RsgA (352 aa).

The span at 1–11 (MTKRKLSKGQQ) shows a compositional bias: basic residues. Positions 1–35 (MTKRKLSKGQQRRVQENHKKRLQSKEKKNHVELDD) are disordered. Basic and acidic residues predominate over residues 13–33 (RVQENHKKRLQSKEKKNHVEL). Residues 114-276 (YYDGIKPIAA…VIDSPGVREF (163 aa)) form the CP-type G domain. GTP-binding positions include 162–165 (NKVD) and 216–224 (GQSGVGKSS). Positions 300, 305, 307, and 313 each coordinate Zn(2+).

Belongs to the TRAFAC class YlqF/YawG GTPase family. RsgA subfamily. As to quaternary structure, monomer. Associates with 30S ribosomal subunit, binds 16S rRNA. Zn(2+) is required as a cofactor.

It is found in the cytoplasm. Its function is as follows. One of several proteins that assist in the late maturation steps of the functional core of the 30S ribosomal subunit. Helps release RbfA from mature subunits. May play a role in the assembly of ribosomal proteins into the subunit. Circularly permuted GTPase that catalyzes slow GTP hydrolysis, GTPase activity is stimulated by the 30S ribosomal subunit. The chain is Small ribosomal subunit biogenesis GTPase RsgA from Proteus mirabilis (strain HI4320).